A 149-amino-acid chain; its full sequence is MHCPFCSAVDTKVIDSRLVGEGTQVRRRRQCVICNERFTTFEVAELVLPRVIKSNDVREPFNEEKLRSGFLKALEKRPVKSDDVEMAINHIKSQLRATGEREVPSKMIGNLVMDALKKLDKVAYIRFASVYRSFEDIREFGEEIARLQD.

A zinc finger spans residues 3-34; that stretch reads CPFCSAVDTKVIDSRLVGEGTQVRRRRQCVIC. The 91-residue stretch at 49–139 folds into the ATP-cone domain; the sequence is PRVIKSNDVR…VYRSFEDIRE (91 aa).

It belongs to the NrdR family. It depends on Zn(2+) as a cofactor.

Functionally, negatively regulates transcription of bacterial ribonucleotide reductase nrd genes and operons by binding to NrdR-boxes. The protein is Transcriptional repressor NrdR of Sodalis glossinidius (strain morsitans).